Reading from the N-terminus, the 206-residue chain is Ribosomal RNA large subunit methyltransferase E (206 aa).

5 residues coordinate S-adenosyl-L-methionine: glycine 60, tryptophan 62, aspartate 80, aspartate 96, and aspartate 121. Residue lysine 161 is the Proton acceptor of the active site.

It belongs to the class I-like SAM-binding methyltransferase superfamily. RNA methyltransferase RlmE family.

The protein localises to the cytoplasm. It carries out the reaction uridine(2552) in 23S rRNA + S-adenosyl-L-methionine = 2'-O-methyluridine(2552) in 23S rRNA + S-adenosyl-L-homocysteine + H(+). Functionally, specifically methylates the uridine in position 2552 of 23S rRNA at the 2'-O position of the ribose in the fully assembled 50S ribosomal subunit. The chain is Ribosomal RNA large subunit methyltransferase E from Nitrosomonas europaea (strain ATCC 19718 / CIP 103999 / KCTC 2705 / NBRC 14298).